A 163-amino-acid polypeptide reads, in one-letter code: C-type lectin lectoxin-Lio1 (163 aa).

An N-terminal signal peptide occupies residues 1–21; that stretch reads MERFIFAALLVVALSLSGTGA. Cystine bridges form between C25–C36, C53–C152, and C127–C144. Positions 32 to 153 constitute a C-type lectin domain; sequence SDGYCYKVFK…CRSKRYFICK (122 aa). The Mannose-binding motif lies at 117–119; sequence EPN. E125 and D141 together coordinate Ca(2+).

This sequence belongs to the true venom lectin family. In terms of tissue distribution, expressed by the venom gland.

The protein resides in the secreted. Mannose-binding lectin which recognizes specific carbohydrate structures and agglutinates a variety of animal cells by binding to cell-surface glycoproteins and glycolipids. May be a calcium-dependent lectin. In Erythrolamprus poecilogyrus (Water snake), this protein is C-type lectin lectoxin-Lio1.